Here is a 126-residue protein sequence, read N- to C-terminus: Probable 4-amino-4-deoxy-L-arabinose-phosphoundecaprenol flippase subunit ArnF (126 aa).

The helical transmembrane segment at 1-21 threads the bilayer; it reads MGFLWALFSVGLVSAAQLLLR. Over 22–47 the chain is Periplasmic; it reads SAMVALPPLTDIVAFLQHLLHFQPGT. A helical transmembrane segment spans residues 48-68; the sequence is VGLFFGLLGYLLSMVCWYFAL. Residues 69–76 lie on the Cytoplasmic side of the membrane; it reads HRLPLSKA. A helical membrane pass occupies residues 77–97; that stretch reads YALLSLSYILVWAAAIWLPGW. The Periplasmic portion of the chain corresponds to 98–100; it reads HEP. Residues 101–121 form a helical membrane-spanning segment; that stretch reads FYWQSLLGVTIIVAGVLTIFW. At 122 to 126 the chain is on the cytoplasmic side; that stretch reads PVKRR.

This sequence belongs to the ArnF family. Heterodimer of ArnE and ArnF.

It localises to the cell inner membrane. It functions in the pathway bacterial outer membrane biogenesis; lipopolysaccharide biosynthesis. Its function is as follows. Translocates 4-amino-4-deoxy-L-arabinose-phosphoundecaprenol (alpha-L-Ara4N-phosphoundecaprenol) from the cytoplasmic to the periplasmic side of the inner membrane. The sequence is that of Probable 4-amino-4-deoxy-L-arabinose-phosphoundecaprenol flippase subunit ArnF from Klebsiella pneumoniae (strain 342).